A 497-amino-acid polypeptide reads, in one-letter code: Glycerol kinase (497 aa).

Position 11 (threonine 11) interacts with ADP. Threonine 11, serine 12, and serine 13 together coordinate ATP. Threonine 11 is a binding site for sn-glycerol 3-phosphate. Residue arginine 15 coordinates ADP. The sn-glycerol 3-phosphate site is built by arginine 81, glutamate 82, tyrosine 133, and aspartate 242. Glycerol-binding residues include arginine 81, glutamate 82, tyrosine 133, aspartate 242, and glutamine 243. ADP contacts are provided by threonine 264 and glycine 307. Positions 264, 307, 311, and 412 each coordinate ATP. Residues glycine 412 and asparagine 416 each coordinate ADP.

Belongs to the FGGY kinase family.

The enzyme catalyses glycerol + ATP = sn-glycerol 3-phosphate + ADP + H(+). The protein operates within polyol metabolism; glycerol degradation via glycerol kinase pathway; sn-glycerol 3-phosphate from glycerol: step 1/1. Its activity is regulated as follows. Inhibited by fructose 1,6-bisphosphate (FBP). In terms of biological role, key enzyme in the regulation of glycerol uptake and metabolism. Catalyzes the phosphorylation of glycerol to yield sn-glycerol 3-phosphate. This Polaromonas sp. (strain JS666 / ATCC BAA-500) protein is Glycerol kinase.